We begin with the raw amino-acid sequence, 187 residues long: Elongation factor P (187 aa).

This sequence belongs to the elongation factor P family.

It localises to the cytoplasm. It participates in protein biosynthesis; polypeptide chain elongation. Functionally, involved in peptide bond synthesis. Stimulates efficient translation and peptide-bond synthesis on native or reconstituted 70S ribosomes in vitro. Probably functions indirectly by altering the affinity of the ribosome for aminoacyl-tRNA, thus increasing their reactivity as acceptors for peptidyl transferase. The chain is Elongation factor P from Pseudarthrobacter chlorophenolicus (strain ATCC 700700 / DSM 12829 / CIP 107037 / JCM 12360 / KCTC 9906 / NCIMB 13794 / A6) (Arthrobacter chlorophenolicus).